Reading from the N-terminus, the 317-residue chain is Melanocyte-stimulating hormone receptor (317 aa).

The Extracellular segment spans residues 1–37 (MPVQGSQRRLLGSLNSTPTATPHLGLAANQTGARCLE). N-linked (GlcNAc...) asparagine glycosylation occurs at N29. The chain crosses the membrane as a helical span at residues 38 to 63 (VSVPDGLFLSLGLVSLVENVLVVTAI). The Cytoplasmic segment spans residues 64–72 (AKNRNLHSP). Residues 73–93 (MYCFICCLALSDLLVSGSNML) form a helical membrane-spanning segment. The Extracellular segment spans residues 94–118 (ETAVTLLLEAGALAARAAVVQQLDN). A helical membrane pass occupies residues 119 to 140 (VIDVITCSSMLSSLCFLGAIAV). Over 141–163 (DRYISIFYALRYHSIVTLPRARR) the chain is Cytoplasmic. Residues 164–183 (AVAAIWVASVLCSTLFIAYY) traverse the membrane as a helical segment. Topologically, residues 184–191 (DHAAVLLC) are extracellular. Residues 192-211 (LVVFFLAMLVLMAVLYVHML) form a helical membrane-spanning segment. Residues 212 to 240 (ARACQHAQGIARLHKRQRLAHQGFGLKGA) are Cytoplasmic-facing. Residues 241-266 (ATLTILLGIFFLCWGPFFLHLTLIVL) traverse the membrane as a helical segment. Over 267–279 (CPQHPTCSCIFKN) the chain is Extracellular. The helical transmembrane segment at 280 to 300 (FNLFLALIICNAIIDPLIYAF) threads the bilayer. The Cytoplasmic segment spans residues 301–317 (RSQELRRTLKEVLLCSW). C315 is lipidated: S-palmitoyl cysteine.

The protein belongs to the G-protein coupled receptor 1 family. In terms of assembly, interacts with MGRN1, but does not undergo MGRN1-mediated ubiquitination; this interaction competes with GNAS-binding and thus inhibits agonist-induced cAMP production. Interacts with OPN3; the interaction results in a decrease in MC1R-mediated cAMP signaling and ultimately a decrease in melanin production in melanocytes.

Its subcellular location is the cell membrane. Receptor for MSH (alpha, beta and gamma) and ACTH. The activity of this receptor is mediated by G proteins which activate adenylate cyclase. Mediates melanogenesis, the production of eumelanin (black/brown) and phaeomelanin (red/yellow), via regulation of cAMP signaling in melanocytes. The chain is Melanocyte-stimulating hormone receptor (MC1R) from Macaca sylvanus (Barbary macaque).